The chain runs to 81 residues: Large ribosomal subunit protein bL27 (81 aa).

Residues 1–11 are compositionally biased toward polar residues; it reads MATSKSGGSSK. The tract at residues 1 to 20 is disordered; sequence MATSKSGGSSKNGRDSISKR.

Belongs to the bacterial ribosomal protein bL27 family.

In Borreliella afzelii (strain PKo) (Borrelia afzelii), this protein is Large ribosomal subunit protein bL27.